The chain runs to 380 residues: Alpha-N-acetylneuraminate alpha-2,8-sialyltransferase ST8SIA3 (380 aa).

The Cytoplasmic segment spans residues 1–9 (MRNCKMARV). Residues 10 to 33 (ASVLGLVMLSVALLILSLISYVSL) form a helical; Signal-anchor for type II membrane protein membrane-spanning segment. Topologically, residues 34 to 380 (KKENIFTTPK…LTKLTLSHCA (347 aa)) are lumenal. 3 N-linked (GlcNAc...) asparagine glycosylation sites follow: Asn93, Asn113, and Asn160. 2 cysteine pairs are disulfide-bonded: Cys162–Cys313 and Cys176–Cys379. 2 residues coordinate CMP-N-acetyl-beta-neuraminate: Asn167 and Asn190. The N-linked (GlcNAc...) asparagine glycan is linked to Asn206. Ser300, Thr301, Gly302, Trp322, Tyr336, and His337 together coordinate CMP-N-acetyl-beta-neuraminate. His354 acts as the Proton donor/acceptor in catalysis.

The protein belongs to the glycosyltransferase 29 family. In terms of assembly, homodimer. Post-translationally, autopolysialylated. As to expression, expressed in fetal and adult brain and fetal liver.

It is found in the golgi apparatus membrane. The catalysed reaction is [N-acetyl-alpha-D-neuraminosyl-(2-&gt;8)](n) + CMP-N-acetyl-beta-neuraminate = [N-acetyl-alpha-D-neuraminosyl-(2-&gt;8)](n+1) + CMP + H(+). It catalyses the reaction alpha-Neu5Ac-(2-&gt;3)-beta-D-Gal-(1-&gt;4)-6S-D-GlcNAc + CMP-N-acetyl-beta-neuraminate = alpha-Neu5Ac-(2-&gt;8)-alpha-Neu5Ac-(2-&gt;3)-beta-D-Gal-(1-&gt;4)-6S-D-GlcNAc + CMP + H(+). It carries out the reaction a ganglioside GM3 (d18:1(4E)) + CMP-N-acetyl-beta-neuraminate = a ganglioside GD3 (d18:1(4E)) + CMP + H(+). The enzyme catalyses a ganglioside GM3 + CMP-N-acetyl-beta-neuraminate = a ganglioside GD3 + CMP + H(+). The catalysed reaction is an N-acetyl-alpha-neuraminyl-(2-&gt;3)-beta-D-galactosyl derivative + CMP-N-acetyl-beta-neuraminate = an N-acetyl-alpha-neuraminyl-(2-&gt;8)-N-acetyl-alpha-neuraminyl-(2-&gt;3)-beta-D-galactosyl derivative + CMP + H(+). It catalyses the reaction an N-acetyl-alpha-neuraminyl-(2-&gt;3)-beta-D-galactosyl-(1-&gt;4)-N-acetyl-beta-D-glucosaminyl derivative + CMP-N-acetyl-beta-neuraminate = an alpha-Neu5Ac-(2-&gt;8)-alpha-Neu5Ac-(2-&gt;3)-beta-D-Gal-(1-&gt;4)-beta-D-GlcNAc derivative + CMP + H(+). The protein operates within protein modification; protein glycosylation. Catalyzes the transfer of sialic acid from a CMP-linked sialic acid donor onto a terminal alpha-2,3-, alpha-2,6-, or alpha-2,8-linked sialic acid of an acceptor, such as N-linked oligosaccharides of glycoproteins and glycolipids through alpha-2,8-linkages. Forms oligosialic and polysialic acid on various sialylated N-acetyllactosamine oligosaccharides of glycoproteins, including FETUB N-glycans, a2-HS-glycoprotein (AHSG) and alpha 2,3-sialylated glycosphingolipids, such as alpha 2,3-sialylparagloboside and ganglioside GM3 and to a lesser extent NCAM1 N-glycans. However, it is much more specific to N-linked oligosaccharides of glycoproteins than glycosphingolipids. 2,3-sialylparagloboside serves as the best acceptor substrate among the glycolipids. alpha-Neu5Ac-(2-&gt;8)-alpha-Neu5Ac-(2-&gt;3)-beta-D-Gal-(1-&gt;4)-6S-D-GlcNAc and monosialyl and disialyl N-acetyllactosamines are the best acceptor substrates among glycoproteins. May plays critical role in the striatum by mediating the formation of disialylated and trisialylated terminal glycotopes on N- and O-glycans of specific striatal proteins, regulating their distribution in lipid rafts, affecting their interaction with other binding partners, and subsequently modulating striatal functions. This is Alpha-N-acetylneuraminate alpha-2,8-sialyltransferase ST8SIA3 from Homo sapiens (Human).